The primary structure comprises 416 residues: Lipoyl synthase, mitochondrial (416 aa).

The N-terminal 33 residues, 1–33, are a transit peptide targeting the mitochondrion; the sequence is MAAASTNRLRLLYTSTRASLPQSTPSILTTRTY. The segment at 20–52 is disordered; that stretch reads LPQSTPSILTTRTYATTDSSTSATSTPKPRRRT. Low complexity predominate over residues 29 to 46; sequence TTRTYATTDSSTSATSTP. [4Fe-4S] cluster contacts are provided by Cys133, Cys138, Cys144, Cys164, Cys168, Cys171, and Ser379. The Radical SAM core domain maps to 147 to 368; the sequence is GGDKAAATAT…QRRAEELGFL (222 aa).

It belongs to the radical SAM superfamily. Lipoyl synthase family. [4Fe-4S] cluster serves as cofactor.

The protein resides in the mitochondrion. The catalysed reaction is [[Fe-S] cluster scaffold protein carrying a second [4Fe-4S](2+) cluster] + N(6)-octanoyl-L-lysyl-[protein] + 2 oxidized [2Fe-2S]-[ferredoxin] + 2 S-adenosyl-L-methionine + 4 H(+) = [[Fe-S] cluster scaffold protein] + N(6)-[(R)-dihydrolipoyl]-L-lysyl-[protein] + 4 Fe(3+) + 2 hydrogen sulfide + 2 5'-deoxyadenosine + 2 L-methionine + 2 reduced [2Fe-2S]-[ferredoxin]. Its pathway is protein modification; protein lipoylation via endogenous pathway; protein N(6)-(lipoyl)lysine from octanoyl-[acyl-carrier-protein]: step 2/2. Catalyzes the radical-mediated insertion of two sulfur atoms into the C-6 and C-8 positions of the octanoyl moiety bound to the lipoyl domains of lipoate-dependent enzymes, thereby converting the octanoylated domains into lipoylated derivatives. This chain is Lipoyl synthase, mitochondrial, found in Aspergillus niger (strain ATCC MYA-4892 / CBS 513.88 / FGSC A1513).